A 104-amino-acid chain; its full sequence is L-rhamnose mutarotase (104 aa).

Substrate is bound at residue Tyr-18. His-22 (proton donor) is an active-site residue. Substrate is bound by residues Tyr-41 and 76 to 77 (WW).

This sequence belongs to the rhamnose mutarotase family. Homodimer.

The protein resides in the cytoplasm. The catalysed reaction is alpha-L-rhamnose = beta-L-rhamnose. It functions in the pathway carbohydrate metabolism; L-rhamnose metabolism. Its function is as follows. Involved in the anomeric conversion of L-rhamnose. The protein is L-rhamnose mutarotase of Escherichia coli O1:K1 / APEC.